The sequence spans 606 residues: Vitamin B12 transporter BtuB (606 aa).

The N-terminal stretch at 1–21 is a signal peptide; it reads MKKTLLAVALAPLCLPSQVFA. Positions 28-35 match the TonB box motif; sequence DVMVVTAN. The TBDR plug domain maps to 40–152; sequence PIKNVIAPIS…IGGVLNIITA (113 aa). The TBDR beta-barrel domain maps to 157–606; it reads ESVAEVTAGG…SYYATATYKF (450 aa). A TonB C-terminal box motif is present at residues 589–606; it reads ETYNVQERSYYATATYKF.

It belongs to the TonB-dependent receptor family. BtuB (TC 1.B.14.3.1) subfamily.

The protein resides in the cell outer membrane. Functionally, involved in the active translocation of vitamin B12 (cyanocobalamin) across the outer membrane to the periplasmic space. It derives its energy for transport by interacting with the trans-periplasmic membrane protein TonB. This is Vitamin B12 transporter BtuB from Photobacterium profundum (strain SS9).